We begin with the raw amino-acid sequence, 434 residues long: MAIHSSFEALAYQSGFANQFSSEALPGALPMGQNSPQKHPLGLYAEQFSGTAFTVARNEARRTWLYRIKPSAAHPRYQRMDRQITGREQGPINPNRLRWNAFDIPAEPVDFIDGLIALASTSAADQAEGVSVYVYAANTSMQRAFFSADGEWLIVPQQGRLRIITEMGVLDIGPLEIAVLPRGLKFSVQLLDGSARGYLCENHGGVLRLPELGPIGSNGLANPRDFLTPVAWFEERDEPVQLVQKFLGELWTTQLQHSPFDVVGWHGNNVPYTYDLRRFNTIGTVSYDHPDPSIFTVLTSPGAVHGQANIDFVIFPPRWMVAENTFRPPWFHRNLMNEFMGLIDGAYDAKAEGFMPGGSSLHNCMSAHGPDNITAEKAIAADLKPHKIENTMAFMFETGKVLRPSLHALACPQLQADYDACWNGMARTFNKESS.

Histidine 289 (proton acceptor) is an active-site residue. Residues histidine 332 and glutamate 338 each contribute to the Fe cation site. Homogentisate contacts are provided by tyrosine 347 and histidine 368. Histidine 368 contributes to the Fe cation binding site.

This sequence belongs to the homogentisate dioxygenase family. As to quaternary structure, hexamer; dimer of trimers. The cofactor is Fe cation.

The enzyme catalyses homogentisate + O2 = 4-maleylacetoacetate + H(+). The protein operates within amino-acid degradation; L-phenylalanine degradation; acetoacetate and fumarate from L-phenylalanine: step 4/6. Its function is as follows. Involved in the catabolism of homogentisate (2,5-dihydroxyphenylacetate or 2,5-OH-PhAc), a central intermediate in the degradation of phenylalanine and tyrosine. Catalyzes the oxidative ring cleavage of the aromatic ring of homogentisate to yield maleylacetoacetate. The protein is Homogentisate 1,2-dioxygenase of Pseudomonas syringae pv. tomato (strain ATCC BAA-871 / DC3000).